Here is a 372-residue protein sequence, read N- to C-terminus: MKKKDYYEVLGVSKTASEQEIRQAYRKLAKQYHPDLNKSPDAHDKMVEINEAADVLLDKDKRKQYDQFGHRAFDNSSGFSSNFTDFEDLFSNMGSSGFSSFTNIFSDFFGSNKSDYQRSTKGQSVSIDIYLTFKELLFGVDKIIELDLLTNCSACFGSGAESNSDINICNNCHGTGEVLVQKNMGFFQFQQSAKCNVCNGAGKIIKNKCKNCKGKGKYLERKKIEVNIPKGIRPNQQIKLSQKGHASTNNGVNGDLIIDIYLKESKVFEIINNNDILMTYNISYLDSILGNEIIIKTLDGDIKYKLPKSINSNEAIIINNKGLYKSINKDKRGDLIIKVNIVVPKNLTKKEKELIEQIYEQTSFNPENNINQ.

A J domain is found at 5–69; the sequence is DYYEVLGVSK…DKRKQYDQFG (65 aa). Residues 139-221 form a CR-type zinc finger; that stretch reads GVDKIIELDL…CKGKGKYLER (83 aa). Residues C152, C155, C169, C172, C195, C198, C209, and C212 each contribute to the Zn(2+) site. 4 CXXCXGXG motif repeats span residues 152–159, 169–176, 195–202, and 209–216; these read CSACFGSG, CNNCHGTG, CNVCNGAG, and CKNCKGKG.

The protein belongs to the DnaJ family. As to quaternary structure, homodimer. It depends on Zn(2+) as a cofactor.

The protein localises to the cytoplasm. Participates actively in the response to hyperosmotic and heat shock by preventing the aggregation of stress-denatured proteins and by disaggregating proteins, also in an autonomous, DnaK-independent fashion. Unfolded proteins bind initially to DnaJ; upon interaction with the DnaJ-bound protein, DnaK hydrolyzes its bound ATP, resulting in the formation of a stable complex. GrpE releases ADP from DnaK; ATP binding to DnaK triggers the release of the substrate protein, thus completing the reaction cycle. Several rounds of ATP-dependent interactions between DnaJ, DnaK and GrpE are required for fully efficient folding. Also involved, together with DnaK and GrpE, in the DNA replication of plasmids through activation of initiation proteins. The chain is Chaperone protein DnaJ from Mycoplasma capricolum subsp. capricolum (strain California kid / ATCC 27343 / NCTC 10154).